A 455-amino-acid polypeptide reads, in one-letter code: Venom prothrombin activator trocarin-D (455 aa).

An N-terminal signal peptide occupies residues 1-20 (MAPQLLLCLILTFLWSLPEA). The propeptide occupies 21-40 (ESNVFLKSKVANRFLQRTKR). The 46-residue stretch at 41–86 (SNSLFEEIRPGNIERECIEEKCSKEEAREVFEDNEKTETFWNVYVD) folds into the Gla domain. 4-carboxyglutamate occurs at positions 46, 47, 54, 56, 59, 60, 65, 66, 69, 72, and 75. Cys57 and Cys62 are disulfide-bonded. The region spanning 86 to 122 (DGDQCSSNPCHYRGTCKDGIGSYTCTCLPNYEGKNCE) is the EGF-like 1; calcium-binding domain. Cystine bridges form between Cys90–Cys101, Cys95–Cys110, Cys112–Cys121, Cys129–Cys140, Cys136–Cys149, Cys151–Cys164, Cys172–Cys328, Cys216–Cys221, Cys236–Cys252, Cys376–Cys390, and Cys401–Cys429. O-linked (Hex...) serine glycosylation occurs at Ser92. The EGF-like 2 domain occupies 129-164 (CRVDNGNCWHFCKRVQSETQCSCAESYRLGVDGHSC). Positions 182–209 (REASLPDFVQSQKATLLKKSDNPSPDIR) are cleaved as a propeptide — activation peptide. One can recognise a Peptidase S1 domain in the interval 210 to 453 (IVNGMDCKLG…FIPWIKKIMS (244 aa)). The active-site Charge relay system is the His251. N-linked (GlcNAc...) asparagine glycosylation is present at Asn254. Residue Asp308 is the Charge relay system of the active site. Residue Ser405 is the Charge relay system of the active site.

The protein belongs to the peptidase S1 family. Snake venom subfamily. In terms of assembly, heterodimer of a light chain and a heavy chain; disulfide-linked. In terms of processing, gamma-carboxyglutamate residues are formed by vitamin K dependent carboxylation. These residues are essential for the binding of calcium. The O-linked saccharides at Ser-92 are a mixture of Xyl-Glc, and Glc along with smaller amounts of Xyl-GlcNAc, GlcNAc, Gal, GalNAc, Xyl-Gal, and Xyl-GalNAc, suggesting that the glycosyl transferases responsible for this modification are non-specific. The N-linked carbohydrate at Asn-254 (Asn-45 of the heavy chain) is a sialylated and diantennary oligosaccharide. In terms of tissue distribution, expressed by the venom gland.

It localises to the secreted. It catalyses the reaction Selective cleavage of Arg-|-Thr and then Arg-|-Ile bonds in prothrombin to form thrombin.. With respect to regulation, activated by calcium and phospholipids. In terms of biological role, snake prothrombin activator that attacks the hemostatic system of prey. This protein is functionally similar to blood coagulation factor Xa. Induces cyanosis and death in mice at 1 mg/kg body weight during blood clotting. The chain is Venom prothrombin activator trocarin-D from Tropidechis carinatus (Australian rough-scaled snake).